A 155-amino-acid polypeptide reads, in one-letter code: 6,7-dimethyl-8-ribityllumazine synthase (155 aa).

5-amino-6-(D-ribitylamino)uracil contacts are provided by residues Phe26, 60 to 62 (ALE), and 84 to 86 (AVI). Residue 89–90 (ET) coordinates (2S)-2-hydroxy-3-oxobutyl phosphate. Residue His92 is the Proton donor of the active site. Asn117 provides a ligand contact to 5-amino-6-(D-ribitylamino)uracil. A (2S)-2-hydroxy-3-oxobutyl phosphate-binding site is contributed by Arg131.

It belongs to the DMRL synthase family.

It carries out the reaction (2S)-2-hydroxy-3-oxobutyl phosphate + 5-amino-6-(D-ribitylamino)uracil = 6,7-dimethyl-8-(1-D-ribityl)lumazine + phosphate + 2 H2O + H(+). The protein operates within cofactor biosynthesis; riboflavin biosynthesis; riboflavin from 2-hydroxy-3-oxobutyl phosphate and 5-amino-6-(D-ribitylamino)uracil: step 1/2. Its function is as follows. Catalyzes the formation of 6,7-dimethyl-8-ribityllumazine by condensation of 5-amino-6-(D-ribitylamino)uracil with 3,4-dihydroxy-2-butanone 4-phosphate. This is the penultimate step in the biosynthesis of riboflavin. This Chromobacterium violaceum (strain ATCC 12472 / DSM 30191 / JCM 1249 / CCUG 213 / NBRC 12614 / NCIMB 9131 / NCTC 9757 / MK) protein is 6,7-dimethyl-8-ribityllumazine synthase.